Consider the following 173-residue polypeptide: Putative phosphoesterase GWCH70_0799 (173 aa).

Catalysis depends on His34, which acts as the Proton donor. 2 consecutive short sequence motifs (HXTX) follow at residues 34–37 (HLTL) and 115–118 (HITI). His115 serves as the catalytic Proton acceptor.

It belongs to the 2H phosphoesterase superfamily. YjcG family.

The protein is Putative phosphoesterase GWCH70_0799 of Geobacillus sp. (strain WCH70).